Here is a 295-residue protein sequence, read N- to C-terminus: Protoheme IX farnesyltransferase (295 aa).

Transmembrane regions (helical) follow at residues Ile24 to His44, Pro45 to Ile65, Ser94 to Val114, Ile117 to Leu137, Asn144 to Thr164, Ser171 to Leu191, Lys216 to Leu236, Leu240 to Val260, and Met272 to Ile292.

The protein belongs to the UbiA prenyltransferase family. Protoheme IX farnesyltransferase subfamily.

It is found in the cell membrane. The catalysed reaction is heme b + (2E,6E)-farnesyl diphosphate + H2O = Fe(II)-heme o + diphosphate. It participates in porphyrin-containing compound metabolism; heme O biosynthesis; heme O from protoheme: step 1/1. Converts heme B (protoheme IX) to heme O by substitution of the vinyl group on carbon 2 of heme B porphyrin ring with a hydroxyethyl farnesyl side group. In Wolbachia pipientis wMel, this protein is Protoheme IX farnesyltransferase.